The primary structure comprises 183 residues: Adenine phosphoribosyltransferase (183 aa).

It belongs to the purine/pyrimidine phosphoribosyltransferase family. As to quaternary structure, homodimer.

It is found in the cytoplasm. The catalysed reaction is AMP + diphosphate = 5-phospho-alpha-D-ribose 1-diphosphate + adenine. The protein operates within purine metabolism; AMP biosynthesis via salvage pathway; AMP from adenine: step 1/1. Functionally, catalyzes a salvage reaction resulting in the formation of AMP, that is energically less costly than de novo synthesis. The chain is Adenine phosphoribosyltransferase from Escherichia coli (strain K12 / MC4100 / BW2952).